The primary structure comprises 1004 residues: Importin subunit beta-5 (1004 aa).

Position 1 is an N-acetylmethionine (Met1). The region spanning 21 to 100 is the Importin N-terminal domain; that stretch reads AETQLLQWCD…REVLLKLCLN (80 aa).

The protein belongs to the importin beta family. As to quaternary structure, interacts with NAP1.

The protein resides in the cytoplasm. The protein localises to the nucleus. Its subcellular location is the nuclear pore complex. Functionally, required for nuclear protein import and mediates docking of import substrate to distinct nucleoporins. Serves a receptor for nuclear localization signals. Mediates the nuclear import of TATA-binding protein (TBP) and of histones H2A and H2B. In Saccharomyces cerevisiae (strain ATCC 204508 / S288c) (Baker's yeast), this protein is Importin subunit beta-5 (KAP114).